The following is a 371-amino-acid chain: uncharacterized protein (371 aa).

The interval 339-371 is disordered; sequence KVTHEDLVKNRPRSPVRPPIPATAKTPDLPERH.

This is an uncharacterized protein from Escherichia coli (strain K12).